The following is a 205-amino-acid chain: Guanylate kinase (205 aa).

The 179-residue stretch at 7 to 185 (GNIFIISAAS…AEGDLLHIVN (179 aa)) folds into the Guanylate kinase-like domain. 14–21 (AASGTGKT) is an ATP binding site.

This sequence belongs to the guanylate kinase family.

The protein localises to the cytoplasm. The enzyme catalyses GMP + ATP = GDP + ADP. In terms of biological role, essential for recycling GMP and indirectly, cGMP. The protein is Guanylate kinase of Neisseria gonorrhoeae (strain ATCC 700825 / FA 1090).